A 131-amino-acid polypeptide reads, in one-letter code: Large ribosomal subunit protein bL17 (131 aa).

The protein belongs to the bacterial ribosomal protein bL17 family. As to quaternary structure, part of the 50S ribosomal subunit. Contacts protein L32.

In Janthinobacterium sp. (strain Marseille) (Minibacterium massiliensis), this protein is Large ribosomal subunit protein bL17.